A 595-amino-acid polypeptide reads, in one-letter code: Adenine deaminase 2 (595 aa).

Belongs to the metallo-dependent hydrolases superfamily. Adenine deaminase family. Mn(2+) serves as cofactor.

The catalysed reaction is adenine + H2O + H(+) = hypoxanthine + NH4(+). This chain is Adenine deaminase 2, found in Rhizobium johnstonii (strain DSM 114642 / LMG 32736 / 3841) (Rhizobium leguminosarum bv. viciae).